We begin with the raw amino-acid sequence, 343 residues long: S-adenosylmethionine:tRNA ribosyltransferase-isomerase (343 aa).

Belongs to the QueA family. Monomer.

It localises to the cytoplasm. It carries out the reaction 7-aminomethyl-7-carbaguanosine(34) in tRNA + S-adenosyl-L-methionine = epoxyqueuosine(34) in tRNA + adenine + L-methionine + 2 H(+). It participates in tRNA modification; tRNA-queuosine biosynthesis. In terms of biological role, transfers and isomerizes the ribose moiety from AdoMet to the 7-aminomethyl group of 7-deazaguanine (preQ1-tRNA) to give epoxyqueuosine (oQ-tRNA). This is S-adenosylmethionine:tRNA ribosyltransferase-isomerase from Pelobacter propionicus (strain DSM 2379 / NBRC 103807 / OttBd1).